Reading from the N-terminus, the 206-residue chain is Small ribosomal subunit protein uS4 (206 aa).

The S4 RNA-binding domain maps to 93–153 (TRLDALVLRA…PKSQTMVPFQ (61 aa)).

The protein belongs to the universal ribosomal protein uS4 family. In terms of assembly, part of the 30S ribosomal subunit. Contacts protein S5. The interaction surface between S4 and S5 is involved in control of translational fidelity.

Functionally, one of the primary rRNA binding proteins, it binds directly to 16S rRNA where it nucleates assembly of the body of the 30S subunit. Its function is as follows. With S5 and S12 plays an important role in translational accuracy. The sequence is that of Small ribosomal subunit protein uS4 from Bifidobacterium animalis subsp. lactis (strain AD011).